A 297-amino-acid polypeptide reads, in one-letter code: Ribosomal RNA small subunit methyltransferase A (297 aa).

Asn31, Leu33, Gly58, Glu79, Asp104, and Asn129 together coordinate S-adenosyl-L-methionine.

The protein belongs to the class I-like SAM-binding methyltransferase superfamily. rRNA adenine N(6)-methyltransferase family. RsmA subfamily.

The protein localises to the cytoplasm. It catalyses the reaction adenosine(1518)/adenosine(1519) in 16S rRNA + 4 S-adenosyl-L-methionine = N(6)-dimethyladenosine(1518)/N(6)-dimethyladenosine(1519) in 16S rRNA + 4 S-adenosyl-L-homocysteine + 4 H(+). In terms of biological role, specifically dimethylates two adjacent adenosines (A1518 and A1519) in the loop of a conserved hairpin near the 3'-end of 16S rRNA in the 30S particle. May play a critical role in biogenesis of 30S subunits. The chain is Ribosomal RNA small subunit methyltransferase A from Staphylococcus aureus (strain Mu3 / ATCC 700698).